A 388-amino-acid polypeptide reads, in one-letter code: Succinate--CoA ligase [ADP-forming] subunit beta (388 aa).

Residues 9–236 form the ATP-grasp domain; sequence KKLFAEHGVP…VAAVDPLEQK (228 aa). Residues K45, 52-54, E91, S94, and E99 each bind ATP; that span reads GRG. Mg(2+)-binding residues include N191 and D205. Residues N256 and 318 to 320 each bind substrate; that span reads GIT.

Belongs to the succinate/malate CoA ligase beta subunit family. In terms of assembly, heterotetramer of two alpha and two beta subunits. It depends on Mg(2+) as a cofactor.

The catalysed reaction is succinate + ATP + CoA = succinyl-CoA + ADP + phosphate. It catalyses the reaction GTP + succinate + CoA = succinyl-CoA + GDP + phosphate. The protein operates within carbohydrate metabolism; tricarboxylic acid cycle; succinate from succinyl-CoA (ligase route): step 1/1. Its function is as follows. Succinyl-CoA synthetase functions in the citric acid cycle (TCA), coupling the hydrolysis of succinyl-CoA to the synthesis of either ATP or GTP and thus represents the only step of substrate-level phosphorylation in the TCA. The beta subunit provides nucleotide specificity of the enzyme and binds the substrate succinate, while the binding sites for coenzyme A and phosphate are found in the alpha subunit. The protein is Succinate--CoA ligase [ADP-forming] subunit beta of Parafrankia sp. (strain EAN1pec).